Reading from the N-terminus, the 367-residue chain is MSDSPVLPRAHGAAVLTAAMRSVAEDFQVDELPAFDASGEGEHLLLTVRKRGQNTAYVAKRLAQWAGIAEMGIGYAGLKDRHAVTTQRFSVHLPKRIAPDLSALDDDDMQVVEHTWHNRKLQRGALHGNRFVLTLREVVGDQAVIDARLHAIAARGIPNWFGEQRFGRDGGNVAAALAMFGHTRQPDGTLAPAPKRRLRNDQRSLLLSAARSALFNQVLTARVEQGNWDAPLDGEAWMLDGSRSVFGPEPWSEVLAERLARFDIHPSGPLWGAGELRCSADAAAIEQAALSDPQSLALRTGLEAAGLKQERRALRLRPQGLAHAWLDAQTLQLTFALPPGCYATAVLWELGEVVDAARVAPQSRSEG.

Aspartate 80 acts as the Nucleophile in catalysis. One can recognise a TRUD domain in the interval 156–316 (GIPNWFGEQR…LKQERRALRL (161 aa)).

This sequence belongs to the pseudouridine synthase TruD family.

The enzyme catalyses uridine(13) in tRNA = pseudouridine(13) in tRNA. Responsible for synthesis of pseudouridine from uracil-13 in transfer RNAs. The sequence is that of tRNA pseudouridine synthase D from Xanthomonas campestris pv. campestris (strain 8004).